A 334-amino-acid polypeptide reads, in one-letter code: Methylthioribose-1-phosphate isomerase (334 aa).

Substrate-binding positions include 44–46 (RGA), Arg-87, and Gln-192. Asp-233 functions as the Proton donor in the catalytic mechanism. 243–244 (NK) serves as a coordination point for substrate.

This sequence belongs to the eIF-2B alpha/beta/delta subunits family. MtnA subfamily.

The catalysed reaction is 5-(methylsulfanyl)-alpha-D-ribose 1-phosphate = 5-(methylsulfanyl)-D-ribulose 1-phosphate. It functions in the pathway amino-acid biosynthesis; L-methionine biosynthesis via salvage pathway; L-methionine from S-methyl-5-thio-alpha-D-ribose 1-phosphate: step 1/6. Its function is as follows. Catalyzes the interconversion of methylthioribose-1-phosphate (MTR-1-P) into methylthioribulose-1-phosphate (MTRu-1-P). In Dehalococcoides mccartyi (strain ATCC BAA-2266 / KCTC 15142 / 195) (Dehalococcoides ethenogenes (strain 195)), this protein is Methylthioribose-1-phosphate isomerase.